A 281-amino-acid chain; its full sequence is Probable protein phosphatase 2C 9 (281 aa).

A PPM-type phosphatase domain is found at 33 to 280; that stretch reads KYGFSLVKGK…DDISCVVVRF (248 aa). D70, G71, D232, and D271 together coordinate Mn(2+).

This sequence belongs to the PP2C family. As to quaternary structure, interacts with phytochromes (via N-terminus). Requires Mg(2+) as cofactor. It depends on Mn(2+) as a cofactor.

The protein resides in the nucleus. It catalyses the reaction O-phospho-L-seryl-[protein] + H2O = L-seryl-[protein] + phosphate. The enzyme catalyses O-phospho-L-threonyl-[protein] + H2O = L-threonyl-[protein] + phosphate. In terms of biological role, involved in the regulation of phytochrome signaling. May regulate phytochrome-interacting factor 3 (PIF3) through the dephosphorylation of phytochrome. The sequence is that of Probable protein phosphatase 2C 9 from Arabidopsis thaliana (Mouse-ear cress).